We begin with the raw amino-acid sequence, 456 residues long: Chordin-like protein 1 (456 aa).

Residues 1 to 28 form the signal peptide; that stretch reads MRRKWRSEDFHFVFFGVLCLLLIDRGKL. VWFC domains lie at 36-101, 115-181, and 262-327; these read TYCV…PRCP, KSCE…PVCR, and RVCV…KVCP. Asn120 carries N-linked (GlcNAc...) asparagine glycosylation. Residues 181-183 carry the Cell attachment site motif; the sequence is RGD. N-linked (GlcNAc...) asparagine glycosylation is present at Asn295.

As to expression, mainly expressed in the ventral retina.

Its subcellular location is the secreted. Its function is as follows. Seems to antagonize the function of BMP4 by binding to it and preventing its interaction with receptors. The protein is Chordin-like protein 1 (CHRDL1) of Gallus gallus (Chicken).